We begin with the raw amino-acid sequence, 185 residues long: Large ribosomal subunit protein bL25 (185 aa).

Belongs to the bacterial ribosomal protein bL25 family. CTC subfamily. Part of the 50S ribosomal subunit; part of the 5S rRNA/L5/L18/L25 subcomplex. Contacts the 5S rRNA. Binds to the 5S rRNA independently of L5 and L18.

Its function is as follows. This is one of the proteins that binds to the 5S RNA in the ribosome where it forms part of the central protuberance. The sequence is that of Large ribosomal subunit protein bL25 from Chlamydia trachomatis serovar D (strain ATCC VR-885 / DSM 19411 / UW-3/Cx).